Here is a 60-residue protein sequence, read N- to C-terminus: Large ribosomal subunit protein uL30 (60 aa).

Belongs to the universal ribosomal protein uL30 family. As to quaternary structure, part of the 50S ribosomal subunit.

The protein is Large ribosomal subunit protein uL30 of Limosilactobacillus fermentum (strain NBRC 3956 / LMG 18251) (Lactobacillus fermentum).